Reading from the N-terminus, the 483-residue chain is Glutamate mutase epsilon subunit (483 aa).

Position 66 (arginine 66) interacts with L-glutamate. Residue glycine 68 coordinates adenosylcob(III)alamin. Residue arginine 100 participates in L-glutamate binding. Asparagine 123 contributes to the adenosylcob(III)alamin binding site. Residues 149–150 (RH), glutamate 171, and tyrosine 177 contribute to the L-glutamate site. Proline 180 is a binding site for adenosylcob(III)alamin. Residue tyrosine 181 coordinates L-glutamate. Adenosylcob(III)alamin contacts are provided by phenylalanine 297, lysine 326, glutamate 330, and isoleucine 334.

Belongs to the methylaspartate mutase GlmE subunit family. Heterotetramer composed of 2 epsilon subunits (GlmE) and 2 sigma subunits (GlmS). GlmE exists as a homodimer and GlmS as a monomer. Adenosylcob(III)alamin is required as a cofactor.

It catalyses the reaction (2S,3S)-3-methyl-L-aspartate = L-glutamate. It functions in the pathway amino-acid degradation; L-glutamate degradation via mesaconate pathway; acetate and pyruvate from L-glutamate: step 1/4. With respect to regulation, competitively inhibited by (2S,4S)-4-fluoroglutamate, 2-methyleneglutarate, (2R,3RS)-3-fluoroglutamate and (S)-3-methylitaconate. Functionally, catalyzes the carbon skeleton rearrangement of L-glutamate to L-threo-3-methylaspartate ((2S,3S)-3-methylaspartate). This is Glutamate mutase epsilon subunit from Clostridium cochlearium.